The primary structure comprises 346 residues: Elongation factor Ts (346 aa).

Positions 80–83 (TDFV) are involved in Mg(2+) ion dislocation from EF-Tu.

It belongs to the EF-Ts family.

It is found in the cytoplasm. Associates with the EF-Tu.GDP complex and induces the exchange of GDP to GTP. It remains bound to the aminoacyl-tRNA.EF-Tu.GTP complex up to the GTP hydrolysis stage on the ribosome. In Streptococcus pyogenes serotype M1, this protein is Elongation factor Ts.